Here is a 747-residue protein sequence, read N- to C-terminus: ATPase family gene 2 protein homolog B (747 aa).

N-acetylmethionine is present on Met1. ATP-binding positions include 234–241 (GPPGVGKT) and 500–507 (GPPGCAKT).

The protein belongs to the AAA ATPase family. AFG2 subfamily. Part of the 55LCC heterohexameric ATPase complex composed at least of AIRIM, AFG2A, AFG2B and CINP. Associates with pre-60S ribosomal particles. As to expression, expressed in neurons; also expressed at lower level in astrocytes, oligodendrocytes and microglia.

It is found in the cytoplasm. Its subcellular location is the cytoskeleton. The protein resides in the spindle. The protein localises to the nucleus. The catalysed reaction is ATP + H2O = ADP + phosphate + H(+). With respect to regulation, in the context of 55LCC heterohexameric ATPase complex, the ATPase activity is stimulated by DNA binding and inhibited in presence of RNA. Its function is as follows. ATP-dependent chaperone part of the 55LCC heterohexameric ATPase complex which is chromatin-associated and promotes replisome proteostasis to maintain replication fork progression and genome stability. Required for replication fork progression, sister chromatid cohesion, and chromosome stability. The ATPase activity is specifically enhanced by replication fork DNA and is coupled to cysteine protease-dependent cleavage of replisome substrates in response to replication fork damage. Uses ATPase activity to process replisome substrates in S-phase, facilitating their proteolytic turnover from chromatin to ensure DNA replication and mitotic fidelity. Plays an essential role in the cytoplasmic maturation steps of pre-60S ribosomal particles by promoting the release of shuttling protein RSL24D1/RLP24 from the pre-ribosomal particles. The protein is ATPase family gene 2 protein homolog B (Afg2b) of Rattus norvegicus (Rat).